We begin with the raw amino-acid sequence, 217 residues long: Ribosomal RNA large subunit methyltransferase E (217 aa).

S-adenosyl-L-methionine is bound by residues glycine 64, tryptophan 66, aspartate 92, aspartate 108, and aspartate 133. Residue lysine 173 is the Proton acceptor of the active site.

It belongs to the class I-like SAM-binding methyltransferase superfamily. RNA methyltransferase RlmE family.

It is found in the cytoplasm. It catalyses the reaction uridine(2552) in 23S rRNA + S-adenosyl-L-methionine = 2'-O-methyluridine(2552) in 23S rRNA + S-adenosyl-L-homocysteine + H(+). Specifically methylates the uridine in position 2552 of 23S rRNA at the 2'-O position of the ribose in the fully assembled 50S ribosomal subunit. The polypeptide is Ribosomal RNA large subunit methyltransferase E (Delftia acidovorans (strain DSM 14801 / SPH-1)).